Here is a 683-residue protein sequence, read N- to C-terminus: Cytoskeleton-associated protein 2 (683 aa).

2 disordered regions span residues 1–28 (MSTPAVPQDLQLPPSQRAQSAFKEQRRQ) and 153–175 (NSKKKQMTTEKQKQDANMPKKPV). Residues Ser178 and Ser190 each carry the phosphoserine modification. Disordered stretches follow at residues 214-236 (KATKPQPVNTSSVTVKSNRSSNM) and 336-403 (EKSE…EKPV). The segment covering 219-236 (QPVNTSSVTVKSNRSSNM) has biased composition (polar residues). Composition is skewed to basic and acidic residues over residues 336–345 (EKSEPVDQRR) and 362–376 (ETSEERKARLSEWKA). A Phosphoserine modification is found at Ser534. A phosphothreonine mark is found at Thr579 and Thr582. Phosphoserine is present on Ser595. Phosphothreonine occurs at positions 596 and 597. Tyr599 bears the Phosphotyrosine mark. Residue Ser602 is modified to Phosphoserine.

It belongs to the CKAP2 family. As to quaternary structure, associates with alpha- and beta-tubulins. Abundant in testis, thymus, and in tumor derived cell lines, while barely detectable in liver, prostate, and kidney.

Its subcellular location is the cytoplasm. The protein resides in the cytoskeleton. It is found in the spindle. It localises to the spindle pole. Possesses microtubule stabilizing properties. Involved in regulating aneuploidy, cell cycling, and cell death in a p53/TP53-dependent manner. The polypeptide is Cytoskeleton-associated protein 2 (Homo sapiens (Human)).